The sequence spans 302 residues: Homoserine kinase (302 aa).

An ATP-binding site is contributed by 92 to 102; sequence PLARGLGSSAT.

The protein belongs to the GHMP kinase family. Homoserine kinase subfamily.

Its subcellular location is the cytoplasm. The enzyme catalyses L-homoserine + ATP = O-phospho-L-homoserine + ADP + H(+). It functions in the pathway amino-acid biosynthesis; L-threonine biosynthesis; L-threonine from L-aspartate: step 4/5. In terms of biological role, catalyzes the ATP-dependent phosphorylation of L-homoserine to L-homoserine phosphate. This is Homoserine kinase from Trichormus variabilis (strain ATCC 29413 / PCC 7937) (Anabaena variabilis).